We begin with the raw amino-acid sequence, 168 residues long: Photosystem I assembly protein Ycf3 (168 aa).

3 TPR repeats span residues Ala35–Pro68, Ser72–Leu105, and Gly120–Asn153.

Belongs to the Ycf3 family.

Its subcellular location is the plastid. The protein localises to the chloroplast thylakoid membrane. Essential for the assembly of the photosystem I (PSI) complex. May act as a chaperone-like factor to guide the assembly of the PSI subunits. The protein is Photosystem I assembly protein Ycf3 of Nandina domestica (Heavenly bamboo).